Consider the following 67-residue polypeptide: Inosine/xanthosine triphosphatase (67 aa).

It belongs to the YjjX NTPase family. As to quaternary structure, homodimer. Mg(2+) serves as cofactor. Requires Mn(2+) as cofactor.

It carries out the reaction XTP + H2O = XDP + phosphate + H(+). The catalysed reaction is ITP + H2O = IDP + phosphate + H(+). Phosphatase that hydrolyzes non-canonical purine nucleotides such as XTP and ITP to their respective diphosphate derivatives. Probably excludes non-canonical purines from DNA/RNA precursor pool, thus preventing their incorporation into DNA/RNA and avoiding chromosomal lesions. The protein is Inosine/xanthosine triphosphatase of Enterobacter cloacae.